The following is a 599-amino-acid chain: Dictomallein-2 (599 aa).

The N-terminal stretch at 1–20 is a signal peptide; it reads MKLILIYLILVFNLFNFINC. The 263-residue stretch at 145-407 folds into the Peptidase M66 domain; the sequence is PDVGQDYTLK…QNYFKNSIYY (263 aa). His298 provides a ligand contact to Zn(2+). Residue Glu299 is part of the active site. Zn(2+) contacts are provided by His302 and His308.

The protein belongs to the dictomallein family. Requires Zn(2+) as cofactor.

The protein localises to the secreted. This chain is Dictomallein-2 (dtmlB), found in Dictyostelium discoideum (Social amoeba).